A 1576-amino-acid chain; its full sequence is Pentafunctional AROM polypeptide (1576 aa).

Residues 1-387 (MGSTTFENPT…YEPKASVVED (387 aa)) form a 3-dehydroquinate synthase region. NAD(+) contacts are provided by residues 49–51 (DTN), 86–89 (ENSK), 117–119 (GGV), and aspartate 122. Residue arginine 133 coordinates 7-phospho-2-dehydro-3-deoxy-D-arabino-heptonate. 142 to 143 (TT) is a binding site for NAD(+). Aspartate 149 and lysine 155 together coordinate 7-phospho-2-dehydro-3-deoxy-D-arabino-heptonate. Lysine 164 lines the NAD(+) pocket. Asparagine 165 serves as a coordination point for 7-phospho-2-dehydro-3-deoxy-D-arabino-heptonate. NAD(+)-binding positions include 182–185 (FLET) and asparagine 193. Zn(2+) is bound at residue glutamate 197. 7-phospho-2-dehydro-3-deoxy-D-arabino-heptonate contacts are provided by residues 197 to 200 (EVVK) and lysine 253. Glutamate 263 serves as the catalytic Proton acceptor; for 3-dehydroquinate synthase activity. 7-phospho-2-dehydro-3-deoxy-D-arabino-heptonate-binding positions include 267-271 (RNILN) and histidine 274. A Zn(2+)-binding site is contributed by histidine 274. The Proton acceptor; for 3-dehydroquinate synthase activity role is filled by histidine 278. 2 residues coordinate 7-phospho-2-dehydro-3-deoxy-D-arabino-heptonate: histidine 290 and lysine 359. Residue histidine 290 coordinates Zn(2+). An EPSP synthase region spans residues 400–841 (VRPSVPETLN…WDILSKSFQV (442 aa)). Cysteine 823 functions as the For EPSP synthase activity in the catalytic mechanism. The shikimate kinase stretch occupies residues 863–1055 (DKSIFIIGMR…RNKPQSFFVS (193 aa)). Position 870 to 877 (870 to 877 (GMRGAGKT)) interacts with ATP. The 3-dehydroquinase stretch occupies residues 1056 to 1276 (LTMPDISGAA…AAPGQLSAAE (221 aa)). Histidine 1179 functions as the Proton acceptor; for 3-dehydroquinate dehydratase activity in the catalytic mechanism. Catalysis depends on lysine 1207, which acts as the Schiff-base intermediate with substrate; for 3-dehydroquinate dehydratase activity. The shikimate dehydrogenase stretch occupies residues 1289 to 1576 (PKSFYLFGTP…RAAVMGDSTA (288 aa)).

In the N-terminal section; belongs to the sugar phosphate cyclases superfamily. Dehydroquinate synthase family. The protein in the 2nd section; belongs to the EPSP synthase family. This sequence in the 3rd section; belongs to the shikimate kinase family. It in the 4th section; belongs to the type-I 3-dehydroquinase family. In the C-terminal section; belongs to the shikimate dehydrogenase family. As to quaternary structure, homodimer. The cofactor is Zn(2+).

It is found in the cytoplasm. The enzyme catalyses 7-phospho-2-dehydro-3-deoxy-D-arabino-heptonate = 3-dehydroquinate + phosphate. It carries out the reaction 3-dehydroquinate = 3-dehydroshikimate + H2O. It catalyses the reaction shikimate + NADP(+) = 3-dehydroshikimate + NADPH + H(+). The catalysed reaction is shikimate + ATP = 3-phosphoshikimate + ADP + H(+). The enzyme catalyses 3-phosphoshikimate + phosphoenolpyruvate = 5-O-(1-carboxyvinyl)-3-phosphoshikimate + phosphate. It participates in metabolic intermediate biosynthesis; chorismate biosynthesis; chorismate from D-erythrose 4-phosphate and phosphoenolpyruvate: step 2/7. It functions in the pathway metabolic intermediate biosynthesis; chorismate biosynthesis; chorismate from D-erythrose 4-phosphate and phosphoenolpyruvate: step 3/7. Its pathway is metabolic intermediate biosynthesis; chorismate biosynthesis; chorismate from D-erythrose 4-phosphate and phosphoenolpyruvate: step 4/7. The protein operates within metabolic intermediate biosynthesis; chorismate biosynthesis; chorismate from D-erythrose 4-phosphate and phosphoenolpyruvate: step 5/7. It participates in metabolic intermediate biosynthesis; chorismate biosynthesis; chorismate from D-erythrose 4-phosphate and phosphoenolpyruvate: step 6/7. Its function is as follows. The AROM polypeptide catalyzes 5 consecutive enzymatic reactions in prechorismate polyaromatic amino acid biosynthesis. This chain is Pentafunctional AROM polypeptide, found in Sclerotinia sclerotiorum (strain ATCC 18683 / 1980 / Ss-1) (White mold).